Reading from the N-terminus, the 713-residue chain is Macrophage-expressed gene 1 protein (713 aa).

Residues 1-19 (MNSFMALVLIWMIIACAEA) form the signal peptide. Positions 30-345 (GFQICKNALK…TAVRHYYTFN (316 aa)) constitute an MACPF domain. A disulfide bond links cysteine 34 and cysteine 70. 2 beta stranded membrane passes run 113 to 120 (LSINTELA) and 127 to 132 (GKFSTE). The N-linked (GlcNAc...) asparagine glycan is linked to asparagine 185. The next 2 membrane-spanning stretches (beta stranded) occupy residues 235-244 (TVTASAGIAF) and 248-256 (VNFKVETDY). The N-linked (GlcNAc...) asparagine glycan is linked to asparagine 269. A disulfide bridge links cysteine 350 with cysteine 369. N-linked (GlcNAc...) asparagine glycosylation is present at asparagine 375. 5 cysteine pairs are disulfide-bonded: cysteine 385–cysteine 394, cysteine 432–cysteine 446, cysteine 436–cysteine 442, cysteine 531–cysteine 569, and cysteine 554–cysteine 574. A P2 region spans residues 410–653 (PPGYSPVHLL…GDSNGMSGGE (244 aa)). Residues 654–674 (AAGITLGVTIALGIVITLAIY) form a helical membrane-spanning segment.

The protein belongs to the MPEG1 family. As to quaternary structure, homooligomer; predominantly forms a homooligomeric arc-shaped pore complex instead of complete rings of 16 subunits. Proteolytically processed in two steps to generate the Macrophage-expressed gene 1 protein, processed form: cleaved by trypsin in proximity of the helical transmembrane domain releases the ectodomain into the lysosomal lumen to orient the pore-forming domain toward the endogenous membranes, and processed by the asparagine endopeptidase (LGMN). Proteolytic processing in antigen-containing vesicles is pH-dependent. In terms of processing, monoubiquitinated in response to bacterial infection; ubiquitination is required for vesicular localization and antibacterial activity and can be blocked by bacterial cell cycle inhibiting factor (cif). As to expression, expressed constitutively in a variety of cell types including macrophages, microglia, neutrophils, T cells, marginal zone B cells, keratinocytes, splenocytes and intestinal epithelial cells.

The protein resides in the cytoplasmic vesicle membrane. Its subcellular location is the cytoplasmic vesicle. It localises to the phagosome membrane. With respect to regulation, forms arc- and ring-shaped pre-pores on top of the membrane at neutral to slightly acidic pH conditions and converts to pores upon acidification. Undergoes transition from the pre-pore to the pore in a processive clockwise hand-over-hand process. In the pore state, 2 alpha-helical regions refold into transmembrane hairpins (TMH1 and TMH2) in each protomer that form in the ensemble complex giant beta-barrel transmembrane pores. Pore-forming protein involved in both innate and adaptive immunity. Plays a central role in antigen cross-presentation in dendritic cells by forming a pore in antigen-containing compartments, thereby promoting delivery of antigens for cross-presentation. Also involved in innate immune response following bacterial infection; shows antibacterial activity against a wide spectrum of Gram-positive, Gram-negative and acid-fast bacteria. Reduces the viability of the intracytosolic pathogen L.monocytogenes by inhibiting acidification of the phagocytic vacuole of host cells which restricts bacterial translocation from the vacuole to the cytosol. Required for the antibacterial activity of reactive oxygen species and nitric oxide. In terms of biological role, pore-forming protein that plays a central role in antigen cross-presentation in dendritic cells by mediating delivery of antigens for cross-presentation. Dendritic cells bridge innate and adaptive immunity by capturing exogenous antigens on MHC class-I molecules and presenting them to naive CD8(+) T-cells. Acts by forming a pore in antigen-containing compartments, promoting the release of antigens into the cytosol, enabling generation of MHCI:peptide complexes and T-cell priming. This Mus musculus (Mouse) protein is Macrophage-expressed gene 1 protein.